We begin with the raw amino-acid sequence, 303 residues long: uncharacterized protein (303 aa).

The HTH araC/xylS-type domain occupies 183-281 (KDILFYLNNN…GCSPSDYRRQ (99 aa)). DNA-binding regions (H-T-H motif) lie at residues 200-221 (EQLSKKFRASVSYICHEFTKEY) and 248-271 (QAEISWRVGYENVDHFAKLFLRHV).

This is an uncharacterized protein from Escherichia coli (strain K12).